The following is a 671-amino-acid chain: Fusexin 1 (671 aa).

The Cytoplasmic portion of the chain corresponds to 1-12 (MRAVSDFLKNKW). A helical membrane pass occupies residues 13-33 (VAVPAVALLILSLGFLAQNYI). Over 34–574 (TGSFVSGDQI…DPFCADGPLE (541 aa)) the chain is Extracellular. Intrachain disulfides connect Cys145/Cys180, Cys409/Cys452, Cys480/Cys500, and Cys513/Cys528. A fusion loop region spans residues 168–173 (GAIADY). Residues 575-595 (MLSKMFHLVAGTAVAFFTGSL) traverse the membrane as a helical segment. The Cytoplasmic segment spans residues 596-628 (GYRAGRWVDGEYQIKGGFDPLKSRSVSRAKRGR). The chain crosses the membrane as a helical span at residues 629-649 (FLIGLIAELVSFLLGFYVILL). A topological domain (extracellular) is located at residue Val650. A helical transmembrane segment spans residues 651 to 671 (PIWAQLMVILGYVLFKYYTPF).

This sequence belongs to the HAP2/GCS1 family. Fusexin 1 subfamily. Homotrimer stabilized by interdomain contacts and numerous Ca(2+) and Na(+) ions.

The protein localises to the cell surface. Its subcellular location is the cell membrane. Its function is as follows. Exhibits fusogenic activity. Mediates cell-cell fusion in mammalian cells (bilateral fusion). This Natrinema altunense (strain JCM 12890 / CGMCC 1.3731 / AJ2) protein is Fusexin 1.